We begin with the raw amino-acid sequence, 206 residues long: Proteasome subunit beta type-2 (206 aa).

Belongs to the peptidase T1B family. As to quaternary structure, the 26S proteasome consists of a 20S proteasome core and two 19S regulatory subunits. The 20S proteasome core is composed of 28 subunits that are arranged in four stacked rings, resulting in a barrel-shaped structure. The two end rings are each formed by seven alpha subunits, and the two central rings are each formed by seven beta subunits. The catalytic chamber with the active sites is on the inside of the barrel.

Its subcellular location is the cytoplasm. The protein resides in the nucleus. In terms of biological role, non-catalytic component of the proteasome, a multicatalytic proteinase complex which is characterized by its ability to cleave peptides with Arg, Phe, Tyr, Leu, and Glu adjacent to the leaving group at neutral or slightly basic pH. The proteasome has an ATP-dependent proteolytic activity. The polypeptide is Proteasome subunit beta type-2 (PSB4) (Trypanosoma brucei brucei).